Here is a 176-residue protein sequence, read N- to C-terminus: Small ribosomal subunit protein uS5c (176 aa).

One can recognise an S5 DRBM domain in the interval 26–89 (LVERLIKISR…TDGRKNLIEL (64 aa)).

The protein belongs to the universal ribosomal protein uS5 family. As to quaternary structure, part of the 30S ribosomal subunit. Contacts protein S4.

Its subcellular location is the plastid. It is found in the chloroplast. Functionally, with S4 and S12 plays an important role in translational accuracy. This Phaeodactylum tricornutum (strain CCAP 1055/1) protein is Small ribosomal subunit protein uS5c (rps5).